Here is a 420-residue protein sequence, read N- to C-terminus: Multiple sugar-binding protein (420 aa).

The first 22 residues, 1-22, serve as a signal peptide directing secretion; it reads MKWYKKIGLLGIVGLTSVLLAA. A lipid anchor (N-palmitoyl cysteine) is attached at Cys-23. Cys-23 is lipidated: S-diacylglycerol cysteine.

The protein belongs to the bacterial solute-binding protein 1 family.

It is found in the cell membrane. In terms of biological role, involved in a binding protein-dependent transport system responsible for the uptake of melibiose, raffinose and isomaltotriose. The protein is Multiple sugar-binding protein of Streptococcus mutans serotype c (strain ATCC 700610 / UA159).